We begin with the raw amino-acid sequence, 781 residues long: DNA translocase FtsK 2 (781 aa).

Transmembrane regions (helical) follow at residues 24–44, 74–94, 120–140, and 170–190; these read LLGEVRWFLLLAVTIAFLTIL, FADVLLFVFGASAYWWALLLL, AGVTWFGFALILSASMGLEAI, and GFTGGTLLLLLMFTVGLSLFF. Over 191–781 the chain is Cytoplasmic; the sequence is HFSWLNLAEQ…NRNGNVVEEE (591 aa). The 210-residue stretch at 414–623 folds into the FtsK domain; sequence GKPVVADLAK…FQVSSKIDSR (210 aa). ATP is bound at residue 434–439; that stretch reads GSGKSV.

It belongs to the FtsK/SpoIIIE/SftA family. Homohexamer. Forms a ring that surrounds DNA.

It is found in the cell inner membrane. In terms of biological role, essential cell division protein that coordinates cell division and chromosome segregation. The N-terminus is involved in assembly of the cell-division machinery. The C-terminus functions as a DNA motor that moves dsDNA in an ATP-dependent manner towards the dif recombination site, which is located within the replication terminus region. Translocation stops specifically at Xer-dif sites, where FtsK interacts with the Xer recombinase, allowing activation of chromosome unlinking by recombination. FtsK orienting polar sequences (KOPS) guide the direction of DNA translocation. FtsK can remove proteins from DNA as it translocates, but translocation stops specifically at XerCD-dif site, thereby preventing removal of XerC and XerD from dif. In Ralstonia nicotianae (strain ATCC BAA-1114 / GMI1000) (Ralstonia solanacearum), this protein is DNA translocase FtsK 2 (ftsK2).